The chain runs to 344 residues: UDP-3-O-acylglucosamine N-acyltransferase (344 aa).

The Proton acceptor role is filled by His236.

Belongs to the transferase hexapeptide repeat family. LpxD subfamily. Homotrimer.

It catalyses the reaction a UDP-3-O-[(3R)-3-hydroxyacyl]-alpha-D-glucosamine + a (3R)-hydroxyacyl-[ACP] = a UDP-2-N,3-O-bis[(3R)-3-hydroxyacyl]-alpha-D-glucosamine + holo-[ACP] + H(+). It participates in bacterial outer membrane biogenesis; LPS lipid A biosynthesis. In terms of biological role, catalyzes the N-acylation of UDP-3-O-acylglucosamine using 3-hydroxyacyl-ACP as the acyl donor. Is involved in the biosynthesis of lipid A, a phosphorylated glycolipid that anchors the lipopolysaccharide to the outer membrane of the cell. The protein is UDP-3-O-acylglucosamine N-acyltransferase of Nitratidesulfovibrio vulgaris (strain ATCC 29579 / DSM 644 / CCUG 34227 / NCIMB 8303 / VKM B-1760 / Hildenborough) (Desulfovibrio vulgaris).